Reading from the N-terminus, the 94-residue chain is Aspartyl/glutamyl-tRNA(Asn/Gln) amidotransferase subunit C (94 aa).

A disordered region spans residues 72–94; it reads PREKALQGAPEVSEGQFKVPRVV.

Belongs to the GatC family. Heterotrimer of A, B and C subunits.

It catalyses the reaction L-glutamyl-tRNA(Gln) + L-glutamine + ATP + H2O = L-glutaminyl-tRNA(Gln) + L-glutamate + ADP + phosphate + H(+). The enzyme catalyses L-aspartyl-tRNA(Asn) + L-glutamine + ATP + H2O = L-asparaginyl-tRNA(Asn) + L-glutamate + ADP + phosphate + 2 H(+). Functionally, allows the formation of correctly charged Asn-tRNA(Asn) or Gln-tRNA(Gln) through the transamidation of misacylated Asp-tRNA(Asn) or Glu-tRNA(Gln) in organisms which lack either or both of asparaginyl-tRNA or glutaminyl-tRNA synthetases. The reaction takes place in the presence of glutamine and ATP through an activated phospho-Asp-tRNA(Asn) or phospho-Glu-tRNA(Gln). This chain is Aspartyl/glutamyl-tRNA(Asn/Gln) amidotransferase subunit C, found in Moorella thermoacetica (strain ATCC 39073 / JCM 9320).